Reading from the N-terminus, the 522-residue chain is Putative aminopeptidase W07G4.4 (522 aa).

Residues K271 and D276 each coordinate Zn(2+). Residue K283 is part of the active site. Zn(2+) contacts are provided by D294, D354, and E356. R358 is an active-site residue.

It belongs to the peptidase M17 family. Zn(2+) serves as cofactor.

The sequence is that of Putative aminopeptidase W07G4.4 (lap-2) from Caenorhabditis elegans.